A 193-amino-acid chain; its full sequence is Ion-translocating oxidoreductase complex subunit A (193 aa).

The next 6 helical transmembrane spans lie at 5–25 (VLLLIGTVLVNNFVLVQFLGL), 39–59 (IGMSLATTFVLTLASVTSYLV), 63–83 (ILIPLDITYLRTMSFILVIAV), 102–122 (LLGIFLPLITTNCAVLGVALL), 134–154 (AVYGFGAAVGFSLVLVLFAAL), and 171–191 (SIALITAGLMSMAFMGFTGLV).

It belongs to the NqrDE/RnfAE family. The complex is composed of six subunits: RnfA, RnfB, RnfC, RnfD, RnfE and RnfG.

It is found in the cell inner membrane. Part of a membrane-bound complex that couples electron transfer with translocation of ions across the membrane. The chain is Ion-translocating oxidoreductase complex subunit A from Pseudoalteromonas translucida (strain TAC 125).